The primary structure comprises 226 residues: Isoprenyl transferase (226 aa).

Residue aspartate 12 is part of the active site. Residue aspartate 12 coordinates Mg(2+). Substrate is bound by residues 13 to 16, tryptophan 17, lysine 25, histidine 29, and 57 to 59; these read GNAR and SSE. Asparagine 60 serves as the catalytic Proton acceptor. Residues tryptophan 61, arginine 63, arginine 174, and 180-182 contribute to the substrate site; that span reads RIS. Glutamate 193 contributes to the Mg(2+) binding site.

Belongs to the UPP synthase family. Homodimer. The cofactor is Mg(2+).

Catalyzes the condensation of isopentenyl diphosphate (IPP) with allylic pyrophosphates generating different type of terpenoids. This is Isoprenyl transferase from Rickettsia typhi (strain ATCC VR-144 / Wilmington).